The following is a 157-amino-acid chain: dCTP deaminase (157 aa).

Residues 79–84, aspartate 95, glutamine 124, and tyrosine 138 contribute to the dCTP site; that span reads RSSLAR.

Belongs to the dCTP deaminase family. Homotrimer.

It catalyses the reaction dCTP + H2O + H(+) = dUTP + NH4(+). It participates in pyrimidine metabolism; dUMP biosynthesis; dUMP from dCTP (dUTP route): step 1/2. Its function is as follows. Catalyzes the deamination of dCTP to dUTP. This Thermococcus gammatolerans (strain DSM 15229 / JCM 11827 / EJ3) protein is dCTP deaminase.